The sequence spans 126 residues: Aspartate 1-decarboxylase (126 aa).

Catalysis depends on Ser25, which acts as the Schiff-base intermediate with substrate; via pyruvic acid. Ser25 carries the post-translational modification Pyruvic acid (Ser). Thr57 contributes to the substrate binding site. Tyr58 acts as the Proton donor in catalysis. Residue 73-75 coordinates substrate; sequence GAA.

It belongs to the PanD family. In terms of assembly, heterooctamer of four alpha and four beta subunits. It depends on pyruvate as a cofactor. In terms of processing, is synthesized initially as an inactive proenzyme, which is activated by self-cleavage at a specific serine bond to produce a beta-subunit with a hydroxyl group at its C-terminus and an alpha-subunit with a pyruvoyl group at its N-terminus.

The protein localises to the cytoplasm. It catalyses the reaction L-aspartate + H(+) = beta-alanine + CO2. The protein operates within cofactor biosynthesis; (R)-pantothenate biosynthesis; beta-alanine from L-aspartate: step 1/1. Its function is as follows. Catalyzes the pyruvoyl-dependent decarboxylation of aspartate to produce beta-alanine. This Methylobacillus flagellatus (strain ATCC 51484 / DSM 6875 / VKM B-1610 / KT) protein is Aspartate 1-decarboxylase.